Here is a 396-residue protein sequence, read N- to C-terminus: Sialyltransferase-like protein 2 (396 aa).

Over 1-6 (MKRRHL) the chain is Cytoplasmic. Residues 7–23 (PPVLVLLLLSILSLSFR) traverse the membrane as a helical; Signal-anchor for type II membrane protein segment. Over 24 to 396 (RRLLVLQGPP…FTVPPVRLHR (373 aa)) the chain is Lumenal. N72, N260, and N304 each carry an N-linked (GlcNAc...) asparagine glycan.

It belongs to the glycosyltransferase 29 family.

The protein localises to the golgi apparatus membrane. Does not possess sialyltransferase-like activity in vitro. The protein is Sialyltransferase-like protein 2 of Oryza sativa subsp. indica (Rice).